A 203-amino-acid chain; its full sequence is V-type ATP synthase subunit D (203 aa).

This sequence belongs to the V-ATPase D subunit family.

Functionally, produces ATP from ADP in the presence of a proton gradient across the membrane. This chain is V-type ATP synthase subunit D, found in Streptococcus pneumoniae (strain Hungary19A-6).